The following is a 555-amino-acid chain: MNARADRAGDTVHRVPVLVVGGSLVGLSTSVFLGRLGVRHMLVERHAGTSVHPRGRGNNVRTMEVYRAAGVEQGIRRAAATLAGNHGILQTPSLVGDEGEWLLRDIDPGGGLARFSPSSWCLCSQNDLEPVLLDHAVELGGEIRFSTELQSFEQDPAGVTAVIKSRRSGEHTTVRADYLVAADGPRSPVREQLGIGQSGPGDLFHNVSVTFRSRRLAEFVGDRHFIVCYLTNPEADGALLPVDNRENWVFHAPWYPRAARPLEDFTDERCADHIRRAVGVPDLDVEITGKAPWHAAQRVARQYRAGRVFLAGDSAHEMSPTGAFGSNTGIQDAHNLAWKLAAVLGGWAGDGLLDTYDAERRPVAEATTARAAARSAEHSHPGFAPPPGTSGGPQGGILNVALGYRYPGGAVLGADPATPVVPEALTLAGEPGSRAPHLWMSRRGERLSTLDLYERSPVLLSDADAGAPDAWHESAVRLAEELSVPLTSYRVGRSAGADLTPEDDVNWTARHGTPPGGAVLVRPDGFVAWRSQEPVPAEETEPTLRHVLTTVLSLG.

FAD is bound by residues 16 to 45 (PVLVVGGSLVGLSTSVFLGRLGVRHMLVER) and 303 to 313 (YRAGRVFLAGD). The interval 366–395 (ATTARAAARSAEHSHPGFAPPPGTSGGPQG) is disordered.

Belongs to the PheA/TfdB FAD monooxygenase family. FAD serves as cofactor.

Involved in developmentally regulated synthesis of a compound biosynthetically related to polyketide antibiotics which is essential for spore color in Streptomyces halstedii. The chain is Putative polyketide hydroxylase (schC) from Streptomyces halstedii.